Here is a 1202-residue protein sequence, read N- to C-terminus: DNA-directed RNA polymerase subunit beta (1202 aa).

The disordered stretch occupies residues 1154–1202 (NMDEDDDEVVNVDALAKYAEEHKADDKKNEEENKSEATSTTTDDKTNQN). Over residues 1171-1188 (YAEEHKADDKKNEEENKS) the composition is skewed to basic and acidic residues.

It belongs to the RNA polymerase beta chain family. The RNAP catalytic core consists of 2 alpha, 1 beta, 1 beta' and 1 omega subunit. When a sigma factor is associated with the core the holoenzyme is formed, which can initiate transcription.

It catalyses the reaction RNA(n) + a ribonucleoside 5'-triphosphate = RNA(n+1) + diphosphate. DNA-dependent RNA polymerase catalyzes the transcription of DNA into RNA using the four ribonucleoside triphosphates as substrates. This Limosilactobacillus reuteri (strain DSM 20016) (Lactobacillus reuteri) protein is DNA-directed RNA polymerase subunit beta.